An 873-amino-acid chain; its full sequence is Alanine--tRNA ligase (873 aa).

Zn(2+) contacts are provided by H557, H561, C659, and H663.

The protein belongs to the class-II aminoacyl-tRNA synthetase family. The cofactor is Zn(2+).

The protein localises to the cytoplasm. The enzyme catalyses tRNA(Ala) + L-alanine + ATP = L-alanyl-tRNA(Ala) + AMP + diphosphate. Its function is as follows. Catalyzes the attachment of alanine to tRNA(Ala) in a two-step reaction: alanine is first activated by ATP to form Ala-AMP and then transferred to the acceptor end of tRNA(Ala). Also edits incorrectly charged Ser-tRNA(Ala) and Gly-tRNA(Ala) via its editing domain. In Nitrosococcus oceani (strain ATCC 19707 / BCRC 17464 / JCM 30415 / NCIMB 11848 / C-107), this protein is Alanine--tRNA ligase.